We begin with the raw amino-acid sequence, 304 residues long: Glycine--tRNA ligase alpha subunit (304 aa).

It belongs to the class-II aminoacyl-tRNA synthetase family. In terms of assembly, tetramer of two alpha and two beta subunits.

The protein localises to the cytoplasm. It catalyses the reaction tRNA(Gly) + glycine + ATP = glycyl-tRNA(Gly) + AMP + diphosphate. In Photorhabdus laumondii subsp. laumondii (strain DSM 15139 / CIP 105565 / TT01) (Photorhabdus luminescens subsp. laumondii), this protein is Glycine--tRNA ligase alpha subunit.